The chain runs to 158 residues: Cyclic pyranopterin monophosphate synthase (158 aa).

Residues 76-78 and 114-115 each bind substrate; these read LCH and ME. D129 is a catalytic residue.

It belongs to the MoaC family. Homohexamer; trimer of dimers.

The enzyme catalyses (8S)-3',8-cyclo-7,8-dihydroguanosine 5'-triphosphate = cyclic pyranopterin phosphate + diphosphate. It participates in cofactor biosynthesis; molybdopterin biosynthesis. Functionally, catalyzes the conversion of (8S)-3',8-cyclo-7,8-dihydroguanosine 5'-triphosphate to cyclic pyranopterin monophosphate (cPMP). The protein is Cyclic pyranopterin monophosphate synthase of Shewanella frigidimarina (strain NCIMB 400).